The following is a 268-amino-acid chain: Tryptophan synthase alpha chain (268 aa).

Active-site proton acceptor residues include Glu-49 and Asp-60.

Belongs to the TrpA family. In terms of assembly, tetramer of two alpha and two beta chains.

The catalysed reaction is (1S,2R)-1-C-(indol-3-yl)glycerol 3-phosphate + L-serine = D-glyceraldehyde 3-phosphate + L-tryptophan + H2O. It participates in amino-acid biosynthesis; L-tryptophan biosynthesis; L-tryptophan from chorismate: step 5/5. Functionally, the alpha subunit is responsible for the aldol cleavage of indoleglycerol phosphate to indole and glyceraldehyde 3-phosphate. This chain is Tryptophan synthase alpha chain, found in Salmonella agona (strain SL483).